The following is a 1338-amino-acid chain: MSPVLHFYVRPSGHEGAAPGHTRRKLQGKLPELQGVETELCYNVNWTAEALPSAEETKKLMWLFGCPLLLDDVARESWLLPGSNDLLLEVGPRLNFSTPTSTNIVSVCRATGLGPVDRVETTRRYRLSFAHPPSAEVEAIALATLHDRMTEQHFPHPIQSFSPESMPEPLNGPINILGEGRLALEKANQELGLALDSWDLDFYTKRFQELQRNPSTVEAFDLAQSNSEHSRHWFFKGQLHVDGQKLVHSLFESIMSTQESSNPNNVLKFCDNSSAIQGKEVRFLRPEDPTRPSRFQQQQGLRHVVFTAETHNFPTGVCPFSGATTGTGGRIRDVQCTGRGAHVVAGTAGYCFGNLHIPGYNLPWEDPSFQYPGNFARPLEVAIEASNGASDYGNKFGEPVLAGFARSLGLQLPDGQRREWIKPIMFSGGIGSMEADHISKEAPEPGMEVVKVGGPVYRIGVGGGAASSVQVQGDNTSDLDFGAVQRGDPEMEQKMNRVIRACVEAPKGNPICSLHDQGAGGNGNVLKELSDPAGAIIYTSRFQLGDPTLNALEIWGAEYQESNALLLRSPNRDFLTHVSARERCPACFVGTITGDRRIVLVDDRECPVRRNGQGDAPPTPLPTPVDLELEWVLGKMPRKEFFLQRKPPMLQPLALPPGLSVHQALERVLRLPAVASKRYLTNKVDRSVGGLVAQQQCVGPLQTPLADVAVVALSHEELIGAATALGEQPVKSLLDPKVAARLAVAEALTNLVFALVTDLRDVKCSGNWMWAAKLPGEGAALADACEAMVAVMAALGVAVDGGKDSLSMAARVGTETVRAPGSLVISAYAVCPDITATVTPDLKHPEGRGHLLYVALSPGQHRLGGTALAQCFSQLGEHPPDLDLPENLVRAFSITQGLLKDRLLCSGHDVSDGGLVTCLLEMAFAGNCGLQVDVPVPRVDVLSVLFAEEPGLVLEVQEPDLAQVLKRYRDAGLHCLELGHTGEAGPHAMVRVSVNGAVVLEEPVGELRALWEETSFQLDRLQAEPRCVAEEERGLRERMGPSYCLPPTFPKASVPREPGGPSPRVAILREEGSNGDREMADAFHLAGFEVWDVTMQDLCSGAIGLDTFRGVAFVGGFSYADVLGSAKGWAAAVTFHPRAGAELRRFRKRPDTFSLGVCNGCQLLALLGWVGGDPNEDAAEMGPDSQPARPGLLLRHNLSGRYESRWASVRVGPGPALMLRGMEGAVLPVWSAHGEGYVAFSSPELQAQIEARGLAPLHWADDDGNPTEQYPLNPNGSPGGVAGICSCDGRHLAVMPHPERAVRPWQWAWRPPPFDTLTTSPWLQLFINARNWTLEGSC.

Phosphoserine is present on serine 215. ATP is bound by residues 322–333 and 402–404; these read GATTGTGGRIRD and AGF. At serine 569 the chain carries Phosphoserine. Phosphothreonine is present on residues threonine 619 and threonine 623. Residue alanine 706 participates in ATP binding. The Mg(2+) site is built by aspartate 707, glutamate 746, asparagine 750, and aspartate 909. Serine 911 contacts ATP. A Glutamine amidotransferase type-1 domain is found at 1064–1302; sequence RVAILREEGS…AVMPHPERAV (239 aa). Cysteine 1158 functions as the Nucleophile in the catalytic mechanism. Catalysis depends on residues histidine 1297 and glutamate 1299.

This sequence in the N-terminal section; belongs to the FGAMS family.

The protein resides in the cytoplasm. The catalysed reaction is N(2)-formyl-N(1)-(5-phospho-beta-D-ribosyl)glycinamide + L-glutamine + ATP + H2O = 2-formamido-N(1)-(5-O-phospho-beta-D-ribosyl)acetamidine + L-glutamate + ADP + phosphate + H(+). Its pathway is purine metabolism; IMP biosynthesis via de novo pathway; 5-amino-1-(5-phospho-D-ribosyl)imidazole from N(2)-formyl-N(1)-(5-phospho-D-ribosyl)glycinamide: step 1/2. Phosphoribosylformylglycinamidine synthase involved in the purines biosynthetic pathway. Catalyzes the ATP-dependent conversion of formylglycinamide ribonucleotide (FGAR) and glutamine to yield formylglycinamidine ribonucleotide (FGAM) and glutamate. The chain is Phosphoribosylformylglycinamidine synthase (PFAS) from Homo sapiens (Human).